A 710-amino-acid chain; its full sequence is Probable threonine--tRNA ligase 1, cytoplasmic (710 aa).

Positions 1 to 35 (MSDSQENKPVETPTEVKPVAEKKPAAEKKEKKPAV) are disordered. Over residues 18 to 33 (PVAEKKPAAEKKEKKP) the composition is skewed to basic and acidic residues. A TGS domain is found at 72–137 (KEEPINVTLP…EADCNLQLCK (66 aa)).

The protein belongs to the class-II aminoacyl-tRNA synthetase family.

The protein localises to the cytoplasm. The catalysed reaction is tRNA(Thr) + L-threonine + ATP = L-threonyl-tRNA(Thr) + AMP + diphosphate + H(+). This Dictyostelium discoideum (Social amoeba) protein is Probable threonine--tRNA ligase 1, cytoplasmic (thrS1).